Here is a 224-residue protein sequence, read N- to C-terminus: Respiratory supercomplex factor 2, mitochondrial (224 aa).

The Mitochondrial intermembrane portion of the chain corresponds to M1–R13. The chain crosses the membrane as a helical span at residues S14–L38. Topologically, residues P39 to P47 are mitochondrial matrix. The chain crosses the membrane as a helical span at residues S48–S75. Topologically, residues N76–S103 are mitochondrial intermembrane. The HIG1 domain occupies S89–Q180. Residues T104 to V133 form a helical membrane-spanning segment. Residues I134–T142 lie on the Mitochondrial matrix side of the membrane. Residues K143–N173 traverse the membrane as a helical segment. Over K174 to E184 the chain is Mitochondrial intermembrane. The chain crosses the membrane as a helical span at residues M185–E204. At G205 to S224 the chain is on the mitochondrial matrix side.

In terms of assembly, associates with a subpopulation of the cytochrome bc1-cytochrome c oxidase supercomplexes. Associates in substoichiometric amounts with complex IV. Interacts with COX3.

It localises to the mitochondrion membrane. Its function is as follows. Assembly factor that plays a role in the assembly of the respiratory chain supercomplexes (SCs) composed of ubiquinol-cytochrome c oxidoreductase (cytochrome b-c1 complex, complex III, CIII) and cytochrome c oxidase (complex IV, CIV). May be required for late-stage assembly of the COX12 and COX13 subunits. Required for the generation and maintenance of a normal proton motive force (PMF) across the inner mitochondrial membrane (IMM) by preventing proton leakage through an inactive population of CIV that accumulates when RCF1 and/or RCF2 proteins are absent. This is Respiratory supercomplex factor 2, mitochondrial (RCF2) from Saccharomyces cerevisiae (strain ATCC 204508 / S288c) (Baker's yeast).